Here is a 379-residue protein sequence, read N- to C-terminus: Chaperone protein DnaJ (379 aa).

In terms of domain architecture, J spans 5-69 (DYYEVLGISK…NKRASYDQFG (65 aa)). A CR-type zinc finger spans residues 136-218 (GTTKEISIRK…CHGKGTENKT (83 aa)). C149, C152, C166, C169, C192, C195, C206, and C209 together coordinate Zn(2+). CXXCXGXG motif repeat units follow at residues 149 to 156 (CETCHGDG), 166 to 173 (CSYCNGAG), 192 to 199 (CPKCNGSG), and 206 to 213 (CPTCHGKG).

Belongs to the DnaJ family. Homodimer. Zn(2+) serves as cofactor.

The protein resides in the cytoplasm. Its function is as follows. Participates actively in the response to hyperosmotic and heat shock by preventing the aggregation of stress-denatured proteins and by disaggregating proteins, also in an autonomous, DnaK-independent fashion. Unfolded proteins bind initially to DnaJ; upon interaction with the DnaJ-bound protein, DnaK hydrolyzes its bound ATP, resulting in the formation of a stable complex. GrpE releases ADP from DnaK; ATP binding to DnaK triggers the release of the substrate protein, thus completing the reaction cycle. Several rounds of ATP-dependent interactions between DnaJ, DnaK and GrpE are required for fully efficient folding. Also involved, together with DnaK and GrpE, in the DNA replication of plasmids through activation of initiation proteins. The protein is Chaperone protein DnaJ of Staphylococcus aureus (strain bovine RF122 / ET3-1).